We begin with the raw amino-acid sequence, 605 residues long: Hepatocyte nuclear factor 1-alpha-A (605 aa).

The dimerization stretch occupies residues 1–31 (MASQLSYLQRELLQALLESGVTKEALKKALA). The HNF-p1 domain occupies 1 to 32 (MASQLSYLQRELLQALLESGVTKEALKKALAD). A disordered region spans residues 57 to 81 (QLPNGLGESHISEDESSDDGEDFTP). Residues 85 to 180 (KELERLSPEE…IARLFTFTEF (96 aa)) form the POU-specific atypical domain. Interaction with DNA regions lie at residues 128–130 (QRE), 141–147 (HLSQHLN), 153–156 (KTQK), 206–209 (RFKW), 266–268 (RVY), and 273–276 (NRRK). The Nuclear localization signal motif lies at 200–208 (KKMRRNRFK). Positions 202 to 282 (MRRNRFKWGP…NRRKEEAFRH (81 aa)) form a DNA-binding region, homeobox; HNF1-type. The span at 321–335 (DRSAVMANSQSTPSP) shows a compositional bias: polar residues. The interval 321-343 (DRSAVMANSQSTPSPSALEPSHS) is disordered. Residues 448–453 (PSHQLH) are not present in other members of the HNF1 family.

It belongs to the HNF1 homeobox family. Binds DNA as dimer. Forms a homodimer or heterodimer with HNF1-alpha-B. Potentially also form a heterodimer with HNF1-beta. In terms of tissue distribution, protein expressed in liver, stomach, small intestine, colon and kidney. Not expressed in spleen, lung, blood, heart muscle, skeletal muscle, testis and brain.

It localises to the nucleus. In terms of biological role, transcriptional activator that regulates the tissue specific expression of multiple genes, especially in pancreas and liver. Binds to the hepatocyte specific promoter element HP1. Binds to the inverted palindrome 5'-GTTAATNATTAAC-3'. The chain is Hepatocyte nuclear factor 1-alpha-A (hnf1a-a) from Xenopus laevis (African clawed frog).